We begin with the raw amino-acid sequence, 253 residues long: 5'/3'-nucleotidase SurE (253 aa).

Residues D8, D9, S39, and N92 each coordinate a divalent metal cation.

It belongs to the SurE nucleotidase family. Requires a divalent metal cation as cofactor.

Its subcellular location is the cytoplasm. It carries out the reaction a ribonucleoside 5'-phosphate + H2O = a ribonucleoside + phosphate. The catalysed reaction is a ribonucleoside 3'-phosphate + H2O = a ribonucleoside + phosphate. The enzyme catalyses [phosphate](n) + H2O = [phosphate](n-1) + phosphate + H(+). Its function is as follows. Nucleotidase with a broad substrate specificity as it can dephosphorylate various ribo- and deoxyribonucleoside 5'-monophosphates and ribonucleoside 3'-monophosphates with highest affinity to 3'-AMP. Also hydrolyzes polyphosphate (exopolyphosphatase activity) with the preference for short-chain-length substrates (P20-25). Might be involved in the regulation of dNTP and NTP pools, and in the turnover of 3'-mononucleotides produced by numerous intracellular RNases (T1, T2, and F) during the degradation of various RNAs. In Sodalis glossinidius (strain morsitans), this protein is 5'/3'-nucleotidase SurE.